A 336-amino-acid chain; its full sequence is GTPase Obg (336 aa).

The Obg domain maps to 1 to 159 (MKFVDSATVF…LELAMELKLM (159 aa)). A disordered region spans residues 120–143 (GGHGGRGNQHFATSTNQAPRRSEP). Residues 129–138 (HFATSTNQAP) are compositionally biased toward polar residues. An OBG-type G domain is found at 160 to 323 (ADVGLVGFPN…LKDELWRQVS (164 aa)). GTP is bound by residues 166-173 (GFPNAGKS), 191-195 (FTTLV), 213-216 (DIPG), 280-283 (TKMD), and 304-306 (SSV). Residues serine 173 and threonine 193 each contribute to the Mg(2+) site.

The protein belongs to the TRAFAC class OBG-HflX-like GTPase superfamily. OBG GTPase family. As to quaternary structure, monomer. Mg(2+) serves as cofactor.

It localises to the cytoplasm. An essential GTPase which binds GTP, GDP and possibly (p)ppGpp with moderate affinity, with high nucleotide exchange rates and a fairly low GTP hydrolysis rate. Plays a role in control of the cell cycle, stress response, ribosome biogenesis and in those bacteria that undergo differentiation, in morphogenesis control. The polypeptide is GTPase Obg (Chlorobium phaeovibrioides (strain DSM 265 / 1930) (Prosthecochloris vibrioformis (strain DSM 265))).